The chain runs to 469 residues: UDP-N-acetylmuramate--L-alanine ligase (469 aa).

Residue Gly118 to Thr124 coordinates ATP.

Belongs to the MurCDEF family.

It localises to the cytoplasm. It catalyses the reaction UDP-N-acetyl-alpha-D-muramate + L-alanine + ATP = UDP-N-acetyl-alpha-D-muramoyl-L-alanine + ADP + phosphate + H(+). It participates in cell wall biogenesis; peptidoglycan biosynthesis. Its function is as follows. Cell wall formation. This is UDP-N-acetylmuramate--L-alanine ligase from Ruegeria sp. (strain TM1040) (Silicibacter sp.).